A 144-amino-acid polypeptide reads, in one-letter code: MSDNTGVPEASVETTSVFRADLLKEMESGSQHDASPAGVEGLPEGSALLVVKRGPNAGSRFLLDQETTAAGRHPDSDIFLDDVTVSRRHAEFRRNGDQYEVVDVGSLNGTYVNREPKNSSVLSNGDEIQIGKFRLVFLNGSKEA.

A Phosphothreonine modification is found at threonine 14. Positions 68-117 (TAAGRHPDSDIFLDDVTVSRRHAEFRRNGDQYEVVDVGSLNGTYVNREPK) constitute an FHA domain.

The protein resides in the cytoplasm. Functionally, an essential component of the PknG signaling pathway. When unphosphorylated, it inhibits the activity of 2-oxoglutarate dehydrogenase. When phosphorylated it does not inhibit 2-oxoglutarate dehydrogenase. The polypeptide is Oxoglutarate dehydrogenase inhibitor (odhI) (Corynebacterium jeikeium (strain K411)).